The sequence spans 102 residues: Small ribosomal subunit protein uS10 (102 aa).

The protein belongs to the universal ribosomal protein uS10 family. Part of the 30S ribosomal subunit.

Its function is as follows. Involved in the binding of tRNA to the ribosomes. The chain is Small ribosomal subunit protein uS10 from Thermosipho melanesiensis (strain DSM 12029 / CIP 104789 / BI429).